Reading from the N-terminus, the 102-residue chain is Large ribosomal subunit protein bL21 (102 aa).

The protein belongs to the bacterial ribosomal protein bL21 family. Part of the 50S ribosomal subunit. Contacts protein L20.

Functionally, this protein binds to 23S rRNA in the presence of protein L20. In Geobacter sulfurreducens (strain ATCC 51573 / DSM 12127 / PCA), this protein is Large ribosomal subunit protein bL21.